The chain runs to 317 residues: Melanocyte-stimulating hormone receptor (317 aa).

At 1-37 (MAVQGFQRRLLGSLNSTPTAIPQLGLAANQTGARCLE) the chain is on the extracellular side. An N-linked (GlcNAc...) asparagine glycan is attached at asparagine 29. Residues 38-63 (VSIPDGLFLSLGLVSLVENVLVVATI) form a helical membrane-spanning segment. The Cytoplasmic portion of the chain corresponds to 64–72 (AKNRNLHSP). Residues 73-93 (TYCFICCLALSDLLVSGGNVL) traverse the membrane as a helical segment. Residues 94–118 (ETVVILLLEASALAARAAVVQPLDN) are Extracellular-facing. Residues 119-140 (VIDVITCSSMVSSLCFLGAIAM) form a helical membrane-spanning segment. Residues 141–163 (DRYVSIFYALRYHSIVTLPRARQ) lie on the Cytoplasmic side of the membrane. Residues 164-183 (AIAAIWVASVLFSTLFIAYY) form a helical membrane-spanning segment. At 184-191 (DHAAVLLC) the chain is on the extracellular side. Residues 192-211 (LVVFFLAMLVLMAVLYVHML) traverse the membrane as a helical segment. Topologically, residues 212-240 (ARACQHAQGIARLHKRQRPLHQGFGLKGA) are cytoplasmic. A helical transmembrane segment spans residues 241–266 (VTLTILLGIFFLCWGPFFLHLTLIVL). Residues 267–279 (CPQHPTCSCIFKN) are Extracellular-facing. A helical membrane pass occupies residues 280 to 300 (FNLFLTLIICNAIIDPLIYAF). Residues 301–317 (RRQELRRTLKEGLTCSW) lie on the Cytoplasmic side of the membrane. Cysteine 315 is lipidated: S-palmitoyl cysteine.

This sequence belongs to the G-protein coupled receptor 1 family. As to quaternary structure, interacts with MGRN1, but does not undergo MGRN1-mediated ubiquitination; this interaction competes with GNAS-binding and thus inhibits agonist-induced cAMP production. Interacts with OPN3; the interaction results in a decrease in MC1R-mediated cAMP signaling and ultimately a decrease in melanin production in melanocytes.

The protein resides in the cell membrane. In terms of biological role, receptor for MSH (alpha, beta and gamma) and ACTH. The activity of this receptor is mediated by G proteins which activate adenylate cyclase. Mediates melanogenesis, the production of eumelanin (black/brown) and phaeomelanin (red/yellow), via regulation of cAMP signaling in melanocytes. The sequence is that of Melanocyte-stimulating hormone receptor (MC1R) from Hylobates lar (Lar gibbon).